Consider the following 252-residue polypeptide: Petrobactin import ATP-binding protein YclP (252 aa).

In terms of domain architecture, ABC transporter spans 2–236; the sequence is VEVRNVSKQY…SVLEEIYDMT (235 aa). 34 to 41 is a binding site for ATP; the sequence is GPNGAGKS.

The protein belongs to the ABC transporter superfamily. The complex is composed of two ATP-binding proteins (YclP), two transmembrane proteins (YclN and YclO) and a solute-binding protein (YclQ).

The protein localises to the cell membrane. The enzyme catalyses a Fe(III)-siderophore(out) + ATP + H2O = a Fe(III)-siderophore(in) + ADP + phosphate + H(+). Part of the ABC transporter complex YclNOPQ involved in uptake of ferric-petrobactin. Petrobactin is a photoreactive 3,4-catecholate siderophore produced by many members of the B.cereus group, including B.anthracis. Probably responsible for energy coupling to the transport system. The sequence is that of Petrobactin import ATP-binding protein YclP (yclP) from Bacillus subtilis (strain 168).